Consider the following 447-residue polypeptide: N-succinylarginine dihydrolase (447 aa).

Residues 19 to 28 (AGLSFGNEAS), N110, and 137 to 138 (HR) each bind substrate. E174 is a catalytic residue. R212 contributes to the substrate binding site. H248 is a catalytic residue. 2 residues coordinate substrate: D250 and N359. Catalysis depends on C365, which acts as the Nucleophile.

This sequence belongs to the succinylarginine dihydrolase family. In terms of assembly, homodimer.

The enzyme catalyses N(2)-succinyl-L-arginine + 2 H2O + 2 H(+) = N(2)-succinyl-L-ornithine + 2 NH4(+) + CO2. The protein operates within amino-acid degradation; L-arginine degradation via AST pathway; L-glutamate and succinate from L-arginine: step 2/5. Its function is as follows. Catalyzes the hydrolysis of N(2)-succinylarginine into N(2)-succinylornithine, ammonia and CO(2). The chain is N-succinylarginine dihydrolase from Salmonella paratyphi A (strain ATCC 9150 / SARB42).